The primary structure comprises 428 residues: Cholesterol 7-desaturase (428 aa).

The helical transmembrane segment at 6–26 (IWGFLTAHPISVVTTILIVYL) threads the bilayer. Residues 81–187 (WYCVCESEKL…CIERNNNIYL (107 aa)) enclose the Rieske domain. Residues Cys-122, His-124, Cys-143, and His-146 each contribute to the [2Fe-2S] cluster site.

This sequence belongs to the cholesterol 7-desaturase family. The cofactor is [2Fe-2S] cluster. In terms of tissue distribution, expressed in intestine at all postembryonic stages, including dauer. Expression is reduced in daf-2 mutants.

The protein resides in the membrane. It carries out the reaction cholesterol + NADPH + O2 + H(+) = 7-dehydrocholesterol + NADP(+) + 2 H2O. The enzyme catalyses cholesterol + NADH + O2 + H(+) = 7-dehydrocholesterol + NAD(+) + 2 H2O. It functions in the pathway steroid hormone biosynthesis; dafachronic acid biosynthesis. Functionally, catalyzes the production of 7-dehydrocholesterol (7-DHC or cholesta-5,7-dien-3beta-ol) by inserting a double bond (desaturating) at the C7-C8 single bond of cholesterol. This reaction is the first step in the synthesis of the steroid hormone Delta(7)-dafachronic acid (one of the principal steroid hormones in nematodes). Dafachronic acids bind directly to the nuclear hormone receptor (NHR) daf-12, suppressing dauer formation and inducing reproductive growth. The chain is Cholesterol 7-desaturase (daf-36) from Caenorhabditis elegans.